A 280-amino-acid polypeptide reads, in one-letter code: UPF0276 protein CC_2906 (280 aa).

The protein belongs to the UPF0276 family.

This Caulobacter vibrioides (strain ATCC 19089 / CIP 103742 / CB 15) (Caulobacter crescentus) protein is UPF0276 protein CC_2906.